Consider the following 279-residue polypeptide: Universal stress protein MT2087 (279 aa).

Belongs to the universal stress protein A family.

The protein is Universal stress protein MT2087 of Mycobacterium tuberculosis (strain CDC 1551 / Oshkosh).